The primary structure comprises 148 residues: Nucleoside diphosphate kinase 1 (148 aa).

Lys9, Phe57, Arg85, Thr91, Arg102, and Asn112 together coordinate ATP. His115 (pros-phosphohistidine intermediate) is an active-site residue.

It belongs to the NDK family. The cofactor is Mg(2+).

It catalyses the reaction a 2'-deoxyribonucleoside 5'-diphosphate + ATP = a 2'-deoxyribonucleoside 5'-triphosphate + ADP. The catalysed reaction is a ribonucleoside 5'-diphosphate + ATP = a ribonucleoside 5'-triphosphate + ADP. In terms of biological role, major role in the synthesis of nucleoside triphosphates other than ATP. The ATP gamma phosphate is transferred to the NDP beta phosphate via a ping-pong mechanism, using a phosphorylated active-site intermediate. This chain is Nucleoside diphosphate kinase 1, found in Nicotiana tabacum (Common tobacco).